We begin with the raw amino-acid sequence, 296 residues long: Probable endonuclease 4 (296 aa).

The Zn(2+) site is built by H68, H109, E144, D178, H181, H213, D226, H228, and E258.

It belongs to the AP endonuclease 2 family. Requires Zn(2+) as cofactor.

It carries out the reaction Endonucleolytic cleavage to 5'-phosphooligonucleotide end-products.. Its function is as follows. Endonuclease IV plays a role in DNA repair. It cleaves phosphodiester bonds at apurinic or apyrimidinic (AP) sites, generating a 3'-hydroxyl group and a 5'-terminal sugar phosphate. This is Probable endonuclease 4 from Staphylococcus carnosus (strain TM300).